We begin with the raw amino-acid sequence, 236 residues long: Purine nucleoside phosphorylase DeoD-type (236 aa).

Position 5 (H5) interacts with a purine D-ribonucleoside. Phosphate-binding positions include G21, R25, R44, and 88–91 (RVGT). Residues 180-182 (EME) and 204-205 (SD) each bind a purine D-ribonucleoside. The Proton donor role is filled by D205.

It belongs to the PNP/UDP phosphorylase family. As to quaternary structure, homohexamer; trimer of homodimers.

The enzyme catalyses a purine D-ribonucleoside + phosphate = a purine nucleobase + alpha-D-ribose 1-phosphate. It carries out the reaction a purine 2'-deoxy-D-ribonucleoside + phosphate = a purine nucleobase + 2-deoxy-alpha-D-ribose 1-phosphate. Functionally, catalyzes the reversible phosphorolytic breakdown of the N-glycosidic bond in the beta-(deoxy)ribonucleoside molecules, with the formation of the corresponding free purine bases and pentose-1-phosphate. The chain is Purine nucleoside phosphorylase DeoD-type from Shewanella baltica (strain OS223).